The following is a 215-amino-acid chain: Glycerol-3-phosphate acyltransferase (215 aa).

Transmembrane regions (helical) follow at residues 3–23, 42–61, 68–90, 110–130, 134–154, and 162–182; these read LILL…LWIG, TNTF…LIDI, TLLP…FAVL, AGVL…VFVL, LFSM…ISVL, and LLPG…AIII.

This sequence belongs to the PlsY family. As to quaternary structure, probably interacts with PlsX.

It localises to the cell membrane. It carries out the reaction an acyl phosphate + sn-glycerol 3-phosphate = a 1-acyl-sn-glycero-3-phosphate + phosphate. It functions in the pathway lipid metabolism; phospholipid metabolism. Catalyzes the transfer of an acyl group from acyl-phosphate (acyl-PO(4)) to glycerol-3-phosphate (G3P) to form lysophosphatidic acid (LPA). This enzyme utilizes acyl-phosphate as fatty acyl donor, but not acyl-CoA or acyl-ACP. This is Glycerol-3-phosphate acyltransferase from Streptococcus equi subsp. zooepidemicus (strain H70).